Here is a 725-residue protein sequence, read N- to C-terminus: Homeobox-leucine zipper protein HDG3 (725 aa).

The disordered stretch occupies residues 1-74 (MSQSNMVPVA…PRHKKKKYNR (74 aa)). Low complexity predominate over residues 11 to 40 (NNGDNNNDNENNNNNNNNGGTDNTNAGNDS). The segment covering 46–64 (DSGNTSSGNHGEGLGNNQA) has biased composition (polar residues). Positions 65–74 (PRHKKKKYNR) are enriched in basic residues. Residues 68-127 (KKKKYNRHTQLQISEMEAFFRECPHPDDKQRYDLSAQLGLDPVQIKFWFQNKRTQNKNQQ) constitute a DNA-binding region (homeobox). The stretch at 117–201 (QNKRTQNKNQ…SVTAEKISRL (85 aa)) forms a coiled coil. Residues 243 to 475 (DANTKPIIME…LVRQCERISS (233 aa)) form the START domain.

Belongs to the HD-ZIP homeobox family. Class IV subfamily. In terms of assembly, interacts with AIL7/PLT7, ANT, BBM and AIL1. In terms of tissue distribution, expressed in siliques.

The protein localises to the nucleus. In terms of biological role, probable transcription factor. Seems to promote cell differentiation. The chain is Homeobox-leucine zipper protein HDG3 from Arabidopsis thaliana (Mouse-ear cress).